A 1420-amino-acid polypeptide reads, in one-letter code: DNA-directed RNA polymerase subunit beta'' (1420 aa).

Residues Cys220, Cys295, Cys302, and Cys305 each contribute to the Zn(2+) site.

The protein belongs to the RNA polymerase beta' chain family. RpoC2 subfamily. As to quaternary structure, in plastids the minimal PEP RNA polymerase catalytic core is composed of four subunits: alpha, beta, beta', and beta''. When a (nuclear-encoded) sigma factor is associated with the core the holoenzyme is formed, which can initiate transcription. Zn(2+) serves as cofactor.

Its subcellular location is the plastid. The protein resides in the chloroplast. It carries out the reaction RNA(n) + a ribonucleoside 5'-triphosphate = RNA(n+1) + diphosphate. In terms of biological role, DNA-dependent RNA polymerase catalyzes the transcription of DNA into RNA using the four ribonucleoside triphosphates as substrates. This chain is DNA-directed RNA polymerase subunit beta'', found in Adiantum capillus-veneris (Maidenhair fern).